Reading from the N-terminus, the 649-residue chain is Protein PSK SIMULATOR 3 (649 aa).

Gly-2 carries the N-myristoyl glycine lipid modification. The disordered stretch occupies residues 18–43 (SGSSVADDGREPDFGHSQPNGQTSLI).

The protein localises to the nucleus. Functionally, promotes plant growth, especially at the vegetative stage, probably via the regulation of phytosulfokine (PSK) signaling; PSK are peptide phytohormones acting as growth factors. Together with PSI2 and PSI3, required during vegetative growth and reproduction. May also have a function in carbohydrate metabolism. The chain is Protein PSK SIMULATOR 3 from Arabidopsis thaliana (Mouse-ear cress).